Reading from the N-terminus, the 109-residue chain is Flagellar hook-basal body complex protein FliE (109 aa).

The protein belongs to the FliE family.

It localises to the bacterial flagellum basal body. In Pseudomonas aeruginosa (strain LESB58), this protein is Flagellar hook-basal body complex protein FliE.